The primary structure comprises 321 residues: Methenyltetrahydromethanopterin cyclohydrolase (321 aa).

This sequence belongs to the MCH family.

It is found in the cytoplasm. The catalysed reaction is 5,10-methenyl-5,6,7,8-tetrahydromethanopterin + H2O = N(5)-formyl-5,6,7,8-tetrahydromethanopterin + H(+). It participates in one-carbon metabolism; methanogenesis from CO(2); 5,10-methenyl-5,6,7,8-tetrahydromethanopterin from CO(2): step 3/3. Its function is as follows. Catalyzes the reversible interconversion of 5-formyl-H(4)MPT to methenyl-H(4)MPT(+). The sequence is that of Methenyltetrahydromethanopterin cyclohydrolase from Methanosarcina mazei (strain ATCC BAA-159 / DSM 3647 / Goe1 / Go1 / JCM 11833 / OCM 88) (Methanosarcina frisia).